A 425-amino-acid chain; its full sequence is Serine--tRNA ligase (425 aa).

An L-serine-binding site is contributed by 232–234; it reads TSE. ATP contacts are provided by residues 263–265 and valine 279; that span reads RRE. Glutamate 286 is a binding site for L-serine. Position 350–353 (350–353) interacts with ATP; the sequence is EVVS. Threonine 387 lines the L-serine pocket.

This sequence belongs to the class-II aminoacyl-tRNA synthetase family. Type-1 seryl-tRNA synthetase subfamily. Homodimer. The tRNA molecule binds across the dimer.

It is found in the cytoplasm. It carries out the reaction tRNA(Ser) + L-serine + ATP = L-seryl-tRNA(Ser) + AMP + diphosphate + H(+). The enzyme catalyses tRNA(Sec) + L-serine + ATP = L-seryl-tRNA(Sec) + AMP + diphosphate + H(+). It functions in the pathway aminoacyl-tRNA biosynthesis; selenocysteinyl-tRNA(Sec) biosynthesis; L-seryl-tRNA(Sec) from L-serine and tRNA(Sec): step 1/1. Catalyzes the attachment of serine to tRNA(Ser). Is also able to aminoacylate tRNA(Sec) with serine, to form the misacylated tRNA L-seryl-tRNA(Sec), which will be further converted into selenocysteinyl-tRNA(Sec). The chain is Serine--tRNA ligase from Methanoregula boonei (strain DSM 21154 / JCM 14090 / 6A8).